The primary structure comprises 210 residues: Uracil phosphoribosyltransferase (210 aa).

Residues Arg78, Arg103, and 130-138 (DPMLATGGT) each bind 5-phospho-alpha-D-ribose 1-diphosphate. Uracil contacts are provided by residues Ile193 and 198 to 200 (GDA). Residue Asp199 participates in 5-phospho-alpha-D-ribose 1-diphosphate binding.

The protein belongs to the UPRTase family. Mg(2+) serves as cofactor.

The catalysed reaction is UMP + diphosphate = 5-phospho-alpha-D-ribose 1-diphosphate + uracil. It participates in pyrimidine metabolism; UMP biosynthesis via salvage pathway; UMP from uracil: step 1/1. With respect to regulation, allosterically activated by GTP. Catalyzes the conversion of uracil and 5-phospho-alpha-D-ribose 1-diphosphate (PRPP) to UMP and diphosphate. The sequence is that of Uracil phosphoribosyltransferase from Xanthomonas campestris pv. campestris (strain 8004).